A 66-amino-acid chain; its full sequence is Cytochrome b-c1 complex subunit 9, mitochondrial (66 aa).

Topologically, residues 2 to 17 (SFSSLYKTFFKRNAVF) are mitochondrial matrix. The helical transmembrane segment at 18 to 43 (VGTIFAGAFVFQTVFDTAITSWYENH) threads the bilayer. The Mitochondrial intermembrane portion of the chain corresponds to 44–66 (NKGKLWKDVKARIAAGDGDDDDE).

The protein belongs to the UQCR10/QCR9 family. As to quaternary structure, component of the ubiquinol-cytochrome c oxidoreductase (cytochrome b-c1 complex, complex III, CIII), a multisubunit enzyme composed of 10 subunits. The complex is composed of 3 respiratory subunits cytochrome b (COB), cytochrome c1 (CYT1) and Rieske protein (RIP1), 2 core protein subunits COR1 and QCR2, and 5 low-molecular weight protein subunits QCR6, QCR7, QCR8, QCR9 and QCR10. The complex exists as an obligatory dimer and forms supercomplexes (SCs) in the inner mitochondrial membrane with a monomer or a dimer of cytochrome c oxidase (complex IV, CIV), resulting in 2 different assemblies (supercomplexes III(2)IV and III(2)IV(2)). Interacts with the transmembrane segment of RIP1.

The protein localises to the mitochondrion inner membrane. Its function is as follows. Component of the ubiquinol-cytochrome c oxidoreductase, a multisubunit transmembrane complex that is part of the mitochondrial electron transport chain which drives oxidative phosphorylation. The respiratory chain contains 3 multisubunit complexes succinate dehydrogenase (complex II, CII), ubiquinol-cytochrome c oxidoreductase (cytochrome b-c1 complex, complex III, CIII) and cytochrome c oxidase (complex IV, CIV), that cooperate to transfer electrons derived from NADH and succinate to molecular oxygen, creating an electrochemical gradient over the inner membrane that drives transmembrane transport and the ATP synthase. The cytochrome b-c1 complex catalyzes electron transfer from ubiquinol to cytochrome c, linking this redox reaction to translocation of protons across the mitochondrial inner membrane, with protons being carried across the membrane as hydrogens on the quinol. In the process called Q cycle, 2 protons are consumed from the matrix, 4 protons are released into the intermembrane space and 2 electrons are passed to cytochrome c. In Saccharomyces cerevisiae (strain ATCC 204508 / S288c) (Baker's yeast), this protein is Cytochrome b-c1 complex subunit 9, mitochondrial (QCR9).